A 53-amino-acid polypeptide reads, in one-letter code: Conotoxin Vc5.3 (53 aa).

Positions 1–15 (VILLLLTASAPSVDA) are cleaved as a signal peptide. Residues 16–41 (RPKTEDVPLSSFRDNTKSTLQRLLKR) constitute a propeptide that is removed on maturation.

This sequence belongs to the conotoxin T superfamily. In terms of processing, contains 2 disulfide bonds that can be either 'C1-C3, C2-C4' or 'C1-C4, C2-C3', since these disulfide connectivities have been observed for conotoxins with cysteine framework V (for examples, see AC P0DQQ7 and AC P81755). As to expression, expressed by the venom duct.

It localises to the secreted. The sequence is that of Conotoxin Vc5.3 from Conus victoriae (Queen Victoria cone).